A 189-amino-acid polypeptide reads, in one-letter code: Transcription factor FapR (189 aa).

It belongs to the FapR family.

Transcriptional factor involved in regulation of membrane lipid biosynthesis by repressing genes involved in fatty acid and phospholipid metabolism. The sequence is that of Transcription factor FapR from Listeria welshimeri serovar 6b (strain ATCC 35897 / DSM 20650 / CCUG 15529 / CIP 8149 / NCTC 11857 / SLCC 5334 / V8).